Reading from the N-terminus, the 397-residue chain is Odorant receptor 2a (397 aa).

Topologically, residues 1-38 (MEKQEDFKLNTHSAVYYHWRVWELTGLMRPPGVSSLLY) are cytoplasmic. Residues 39-59 (VVYSITVNLVVTVLFPLSLLA) form a helical membrane-spanning segment. Residues 60 to 72 (RLLFTTNMAGLCE) lie on the Extracellular side of the membrane. A helical transmembrane segment spans residues 73–92 (NLTITITDIVANLKFANVYM). The Cytoplasmic portion of the chain corresponds to 93–131 (VRKQLHEIRSLLRLMDARARLVGDPEEISALRKEVNIAQ). A helical transmembrane segment spans residues 132 to 150 (GTFRTFASIFVFGTTLSCV). Residues 151 to 176 (RVVVRPDRELLYPAWFGVDWMHSTRN) are Extracellular-facing. The helical transmembrane segment at 177–197 (YVLINIYQLFGLIVQAIQNCA) threads the bilayer. At 198–272 (SDSYPPAFLC…IIQRVLSVPC (75 aa)) the chain is on the cytoplasmic side. The helical transmembrane segment at 273-293 (MAQFVCSAAVQCTVAMHFLYV) threads the bilayer. Over 294–301 (ADDHDHTA) the chain is Extracellular. Residues 302 to 322 (MIISIVFFSAVTLEVFVICYF) traverse the membrane as a helical segment. The Cytoplasmic portion of the chain corresponds to 323-363 (GDRMRTQSEALCDAFYDCNWIEQLPKFKRELLFTLARTQRP). Residues 364 to 383 (SLIYAGNYIALSLETFEQVM) form a helical membrane-spanning segment. Residues 384-397 (RFTYSVFTLLLRAK) are Extracellular-facing.

The protein belongs to the insect chemoreceptor superfamily. Heteromeric odorant receptor channel (TC 1.A.69) family. Or2a subfamily. In terms of assembly, interacts with Orco. Complexes exist early in the endomembrane system in olfactory sensory neurons (OSNs), coupling these complexes to the conserved ciliary trafficking pathway. In terms of tissue distribution, expressed in 20 sensory neurons on the distal edge of the antenna.

It localises to the cell membrane. In terms of biological role, odorant receptor which mediates acceptance or avoidance behavior, depending on its substrates. The odorant receptor repertoire encodes a large collection of odor stimuli that vary widely in identity, intensity, and duration. May form a complex with Orco to form odorant-sensing units, providing sensitive and prolonged odorant signaling and calcium permeability. This chain is Odorant receptor 2a (Or2a), found in Drosophila melanogaster (Fruit fly).